Reading from the N-terminus, the 308-residue chain is Ornithine carbamoyltransferase (308 aa).

Residues serine 53–threonine 56, glutamine 80, arginine 104, and histidine 131–glutamine 134 contribute to the carbamoyl phosphate site. L-ornithine contacts are provided by residues asparagine 162, aspartate 225, and serine 229–methionine 230. Residues cysteine 265 to leucine 266 and arginine 293 each bind carbamoyl phosphate.

It belongs to the aspartate/ornithine carbamoyltransferase superfamily. OTCase family.

It localises to the cytoplasm. It carries out the reaction carbamoyl phosphate + L-ornithine = L-citrulline + phosphate + H(+). The protein operates within amino-acid biosynthesis; L-arginine biosynthesis; L-arginine from L-ornithine and carbamoyl phosphate: step 1/3. Its function is as follows. Reversibly catalyzes the transfer of the carbamoyl group from carbamoyl phosphate (CP) to the N(epsilon) atom of ornithine (ORN) to produce L-citrulline. The polypeptide is Ornithine carbamoyltransferase (argF) (Synechocystis sp. (strain ATCC 27184 / PCC 6803 / Kazusa)).